A 430-amino-acid chain; its full sequence is MKLKINSQGLKGRLKVPGDKSISHRSIMFGSIAKGKTVIYDILRGEDVLSTIEAFRAMGVEIEDKGEVITVHGKGISELKAPEKALDMGNSGTSTRLLSGILAGLPFETTLFGDDSLSKRPMDRVATPLQLMGAEITGQTDKVKLPMTIKGSTHLKAIDYVLPVASAQVKSAVIFAALQAEGLTKVVEKEKTRSHTEEMLVQFGGELKVSDKTILVPGGQKLVGQKVVVPGDISSAAFWLVAALVVENSELILENVGVNETRTGIIEVIQAMGGQLEILEQDNVAKAATLKVKASQLKGTEISGDLIPRLIDELPIIALLATQAQGQTIIRDAAELKVKETDRIAVVANALNSMGAKIQPTDDGMIIQGGTKLHAPENSINTLGDHRIGMMAAIAALLVKNGEIELERAEAIQTSYPSFFDDLEQLSENI.

3 residues coordinate 3-phosphoshikimate: lysine 20, serine 21, and arginine 25. Position 20 (lysine 20) interacts with phosphoenolpyruvate. 2 residues coordinate phosphoenolpyruvate: glycine 92 and arginine 120. Serine 166, glutamine 168, aspartate 312, and lysine 339 together coordinate 3-phosphoshikimate. Glutamine 168 contributes to the phosphoenolpyruvate binding site. Residue aspartate 312 is the Proton acceptor of the active site. Residues arginine 343 and arginine 387 each contribute to the phosphoenolpyruvate site.

It belongs to the EPSP synthase family. Monomer.

The protein localises to the cytoplasm. The enzyme catalyses 3-phosphoshikimate + phosphoenolpyruvate = 5-O-(1-carboxyvinyl)-3-phosphoshikimate + phosphate. The protein operates within metabolic intermediate biosynthesis; chorismate biosynthesis; chorismate from D-erythrose 4-phosphate and phosphoenolpyruvate: step 6/7. Catalyzes the transfer of the enolpyruvyl moiety of phosphoenolpyruvate (PEP) to the 5-hydroxyl of shikimate-3-phosphate (S3P) to produce enolpyruvyl shikimate-3-phosphate and inorganic phosphate. In Lactococcus lactis subsp. lactis (strain IL1403) (Streptococcus lactis), this protein is 3-phosphoshikimate 1-carboxyvinyltransferase.